Consider the following 177-residue polypeptide: MSDTEDNKNKQTTRRDFMVLTASSVAAVGAVCTLWPLVDSLNPSADVLALSSIEVDLSNIAVGQTVTVKWQGKPVFITNRTPDKIAEARAVKMSELIDPETDEARVKAGHDNWLVTIGICTHLGCVPLANQGEYDGWFCPCHGSQYDSSGRVRRGPAPLNLAVPPYTFISDKKIRIG.

A helical transmembrane segment spans residues 18 to 38; it reads MVLTASSVAAVGAVCTLWPLV. The Rieske domain occupies 88–175; that stretch reads ARAVKMSELI…YTFISDKKIR (88 aa). [2Fe-2S] cluster-binding residues include Cys120, His122, Cys139, and His142. A disulfide bridge connects residues Cys125 and Cys141.

This sequence belongs to the Rieske iron-sulfur protein family. As to quaternary structure, the main subunits of complex b-c1 are: cytochrome b, cytochrome c1 and the Rieske protein. [2Fe-2S] cluster is required as a cofactor.

The protein resides in the cell membrane. It catalyses the reaction a quinol + 2 Fe(III)-[cytochrome c](out) = a quinone + 2 Fe(II)-[cytochrome c](out) + 2 H(+)(out). In terms of biological role, component of the ubiquinol-cytochrome c reductase complex (complex III or cytochrome b-c1 complex), which is a respiratory chain that generates an electrochemical potential coupled to ATP synthesis. This is Ubiquinol-cytochrome c reductase iron-sulfur subunit (petA) from Rickettsia felis (strain ATCC VR-1525 / URRWXCal2) (Rickettsia azadi).